The sequence spans 402 residues: Serine/threonine transporter SstT (402 aa).

8 helical membrane-spanning segments follow: residues 17–37 (IAIG…ITVI), 44–64 (FVGG…ANAL), 79–99 (IVLY…SHYI), 138–158 (ALSQ…GFAM), 179–199 (IVRW…FDTI), 212–232 (VLIL…NPII), 295–315 (MAGA…TLGI), and 336–356 (ASGI…LFGI).

Belongs to the dicarboxylate/amino acid:cation symporter (DAACS) (TC 2.A.23) family.

It localises to the cell membrane. It carries out the reaction L-serine(in) + Na(+)(in) = L-serine(out) + Na(+)(out). The catalysed reaction is L-threonine(in) + Na(+)(in) = L-threonine(out) + Na(+)(out). Functionally, involved in the import of serine and threonine into the cell, with the concomitant import of sodium (symport system). The chain is Serine/threonine transporter SstT from Streptococcus thermophilus (strain ATCC BAA-491 / LMD-9).